We begin with the raw amino-acid sequence, 38 residues long: Photosystem II reaction center protein L (38 aa).

A helical transmembrane segment spans residues 17–37; that stretch reads SLFWGLLLIFVLAVLFSSYFF.

The protein belongs to the PsbL family. In terms of assembly, PSII is composed of 1 copy each of membrane proteins PsbA, PsbB, PsbC, PsbD, PsbE, PsbF, PsbH, PsbI, PsbJ, PsbK, PsbL, PsbM, PsbT, PsbX, PsbY, PsbZ, Psb30/Ycf12, at least 3 peripheral proteins of the oxygen-evolving complex and a large number of cofactors. It forms dimeric complexes.

The protein resides in the plastid. The protein localises to the chloroplast thylakoid membrane. One of the components of the core complex of photosystem II (PSII). PSII is a light-driven water:plastoquinone oxidoreductase that uses light energy to abstract electrons from H(2)O, generating O(2) and a proton gradient subsequently used for ATP formation. It consists of a core antenna complex that captures photons, and an electron transfer chain that converts photonic excitation into a charge separation. This subunit is found at the monomer-monomer interface and is required for correct PSII assembly and/or dimerization. This chain is Photosystem II reaction center protein L, found in Gracilaria tenuistipitata var. liui (Red alga).